We begin with the raw amino-acid sequence, 274 residues long: MDSRMSDLQALRGFLGGSERLFVLTGAGCSTASGIPDYRDGQGQWKRKPPIDFQAFMGGQPARARYWARSMVGWRHFGQARPNAAHHALARLAQRGQVDLLVTQNVDRLHQAAGGREVLDLHGRLDEVRCMQCDWRGPRGPWQHTLELANPQWAALQAGAAPDGDADLEGQDFSRFVVPSCPRCGGIVKPDVVFFGETVPRERVQRAYAALEHADAVLVVGSSLMLYSGYRFVQAAARAGLPIAAINLGRTRADDMLALKVSRPCDEVLAEVVS.

Residues 1–274 enclose the Deacetylase sirtuin-type domain; it reads MDSRMSDLQA…CDEVLAEVVS (274 aa). Residues 26-46 and 104-107 each bind NAD(+); these read GAGC…GQWK and QNVD. The active-site Proton acceptor is His-122. The Zn(2+) site is built by Cys-130, Cys-133, Cys-181, and Cys-184. NAD(+) is bound by residues 221–223, 247–249, and Cys-265; these read GSS and NLG.

It belongs to the sirtuin family. Class II subfamily. The cofactor is Zn(2+).

The protein resides in the cytoplasm. The enzyme catalyses N(6)-acetyl-L-lysyl-[protein] + NAD(+) + H2O = 2''-O-acetyl-ADP-D-ribose + nicotinamide + L-lysyl-[protein]. Its function is as follows. NAD-dependent protein deacetylase which modulates the activities of several enzymes which are inactive in their acetylated form. The polypeptide is NAD-dependent protein deacetylase (Bordetella bronchiseptica (strain ATCC BAA-588 / NCTC 13252 / RB50) (Alcaligenes bronchisepticus)).